The following is a 218-amino-acid chain: UPF0173 metal-dependent hydrolase Mpal_1063 (218 aa).

It belongs to the UPF0173 family.

This is UPF0173 metal-dependent hydrolase Mpal_1063 from Methanosphaerula palustris (strain ATCC BAA-1556 / DSM 19958 / E1-9c).